A 101-amino-acid polypeptide reads, in one-letter code: Urease subunit beta (101 aa).

Belongs to the urease beta subunit family. In terms of assembly, heterotrimer of UreA (gamma), UreB (beta) and UreC (alpha) subunits. Three heterotrimers associate to form the active enzyme.

It localises to the cytoplasm. The enzyme catalyses urea + 2 H2O + H(+) = hydrogencarbonate + 2 NH4(+). It functions in the pathway nitrogen metabolism; urea degradation; CO(2) and NH(3) from urea (urease route): step 1/1. In Allorhizobium ampelinum (strain ATCC BAA-846 / DSM 112012 / S4) (Agrobacterium vitis (strain S4)), this protein is Urease subunit beta.